Consider the following 192-residue polypeptide: Ion-translocating oxidoreductase complex subunit A (192 aa).

The next 6 membrane-spanning stretches (helical) occupy residues 5–25 (LLLL…FLGL), 38–58 (AIGM…LSFL), 72–92 (LRTM…EMLV), 102–122 (ALGI…VALL), 134–154 (AIYG…FSAM), and 171–191 (AIAM…AGLI).

Belongs to the NqrDE/RnfAE family. In terms of assembly, the complex is composed of six subunits: RnfA, RnfB, RnfC, RnfD, RnfE and RnfG.

Its subcellular location is the cell inner membrane. Functionally, part of a membrane-bound complex that couples electron transfer with translocation of ions across the membrane. In Shewanella denitrificans (strain OS217 / ATCC BAA-1090 / DSM 15013), this protein is Ion-translocating oxidoreductase complex subunit A.